A 519-amino-acid polypeptide reads, in one-letter code: Protein tweety homolog 1 (519 aa).

At 1-42 (MTFASFLINFYSVIPRLNFKFHWTNDVFNLEWSSEYFQALAL) the chain is on the extracellular side. The helical transmembrane segment at 43 to 63 (VACLGAAVSLLLLVTIIIVWI) threads the bilayer. Topologically, residues 64–82 (CQACHKNETTGKTRRRVRR) are cytoplasmic. Residues 83 to 103 (LSTVLFIISVLCFFMLGVCLF) form a helical membrane-spanning segment. Residues 104-217 (ANEHVNRGMS…VLSLYESERW (114 aa)) are Extracellular-facing. 3 N-linked (GlcNAc...) asparagine glycosylation sites follow: N142, N163, and N176. Residues 218–238 (AFLVILLSITMVVLFTGVVAF) form a helical membrane-spanning segment. Topologically, residues 239–245 (CKQSKKG) are cytoplasmic. A helical membrane pass occupies residues 246–266 (AVVFSAIGFFIFVVVWLLISI). Over 267-395 (SLPLTIALAD…GTCNQSVAGM (129 aa)) the chain is Extracellular. 4 N-linked (GlcNAc...) asparagine glycosylation sites follow: N328, N341, N348, and N389. Residues 396-416 (SIYMLSILLLGVFLFILLIVV) form a helical membrane-spanning segment. The Cytoplasmic segment spans residues 417–519 (SKTWNLFSRL…YNNYEDRYNM (103 aa)). The disordered stretch occupies residues 459 to 485 (YNPRTRDRTEPSTNTTSGTADEPNAPL).

The protein belongs to the tweety family.

Its subcellular location is the cell membrane. Probable chloride channel. The polypeptide is Protein tweety homolog 1 (ttyh-1) (Caenorhabditis elegans).